Reading from the N-terminus, the 147-residue chain is Phospholipase A2 SSD1043 (147 aa).

The first 22 residues, 1–22 (MSPKFMFFSIIAVWSCAAVTEA), serve as a signal peptide directing secretion. Residues 23-28 (LFIQHR) constitute a propeptide that is removed on maturation. Cystine bridges form between Cys55–Cys71, Cys70–Cys130, Cys77–Cys123, Cys86–Cys116, and Cys109–Cys121. 2 residues coordinate Ca(2+): Gly56 and Gly58. The active site involves His74. Asp75 serves as a coordination point for Ca(2+). The active site involves Asp124.

The cofactor is Ca(2+). As to expression, expressed by the venom gland.

It is found in the secreted. It carries out the reaction a 1,2-diacyl-sn-glycero-3-phosphocholine + H2O = a 1-acyl-sn-glycero-3-phosphocholine + a fatty acid + H(+). Its function is as follows. PLA2 catalyzes the calcium-dependent hydrolysis of the 2-acyl groups in 3-sn-phosphoglycerides. This Scolopendra dehaani (Thai centipede) protein is Phospholipase A2 SSD1043.